Reading from the N-terminus, the 509-residue chain is Histidine--tRNA ligase, cytoplasmic (509 aa).

An N-acetylalanine modification is found at Ala2. In terms of domain architecture, WHEP-TRS spans 3-59 (DRAALEDLVRVQGERVRGLKQQKASAEQIEEEVAKLLKLKAQLGPDEGKPKFVLKTP). Ser66 is modified (phosphoserine). L-histidine is bound by residues 130–132 (DLT), Arg157, Gln173, Asp177, Arg326, and 330–331 (YY). A Phosphoserine modification is found at Ser356.

Belongs to the class-II aminoacyl-tRNA synthetase family. As to quaternary structure, homodimer.

The protein resides in the cytoplasm. It catalyses the reaction tRNA(His) + L-histidine + ATP = L-histidyl-tRNA(His) + AMP + diphosphate + H(+). In terms of biological role, catalyzes the ATP-dependent ligation of histidine to the 3'-end of its cognate tRNA, via the formation of an aminoacyl-adenylate intermediate (His-AMP). Plays a role in axon guidance. The sequence is that of Histidine--tRNA ligase, cytoplasmic (HARS1) from Bos taurus (Bovine).